We begin with the raw amino-acid sequence, 406 residues long: Calsequestrin-2 (406 aa).

A signal peptide spans 1-19; it reads MKATCWILAGFCLLFCCKA. Asn-335 is a glycosylation site (N-linked (GlcNAc...) asparagine). The segment at 365–406 is disordered; the sequence is VLSGKINTEDDDDDDDDDDDDDDDDDDDDDDDDDDDDDDDDD. Residues 373–406 are compositionally biased toward acidic residues; it reads EDDDDDDDDDDDDDDDDDDDDDDDDDDDDDDDDD.

Belongs to the calsequestrin family. As to expression, skeletal and heart muscle.

The protein resides in the sarcoplasmic reticulum lumen. In terms of biological role, calsequestrin is a high-capacity, moderate affinity, calcium-binding protein and thus acts as an internal calcium store in muscle. Calcium ions are bound by clusters of acidic residues at the protein surface, especially at the interface between subunits. Can bind around 60 Ca(2+) ions. Regulates the release of lumenal Ca(2+) via the calcium release channel RYR2; this plays an important role in triggering muscle contraction. Plays a role in excitation-contraction coupling in the heart and in regulating the rate of heart beats. In Gallus gallus (Chicken), this protein is Calsequestrin-2 (CASQ2).